The following is a 458-amino-acid chain: Histone acetyltransferase KAT8 (458 aa).

Residues 1–14 show a composition bias toward low complexity; sequence MAAQGATAAVAATT. Residues 1-52 form a disordered region; sequence MAAQGATAAVAATTSGIVGEGEPGPGENTSVEGPARSPGRVSPPTPARGEPE. An N-acetylalanine modification is found at A2. Residues S37 and S42 each carry the phosphoserine modification. Residues 55 to 110 form the Tudor-knot domain; that stretch reads VEIGETYLCRRPDSTWHSAEVIQSRVNDQEGREEFYVHYVGFNRRLDEWVDKNRLA. At K113 the chain carries N6-acetyllysine. The Nuclear localization signal motif lies at 140–149; that stretch reads RNQKRKHDEI. The MYST-type HAT domain maps to 174–447; sequence TKVKYVDKIH…VDSVCLKWAP (274 aa). The tract at residues 174–458 is sufficient for interaction with KANSL1; the sequence is TKVKYVDKIH…KHKQVKLSKK (285 aa). A C2HC MYST-type zinc finger spans residues 207-232; sequence LWLCEYCLKYMKFEKSYRFHLGQCQW. Zn(2+) contacts are provided by C210, C213, H226, and C230. The residue at position 274 (K274) is an N6-acetyllysine; by autocatalysis. Positions 317, 319, 325, 326, 327, 329, and 330 each coordinate acetyl-CoA. S348 carries the post-translational modification Phosphoserine. The active-site Proton donor/acceptor is the E350. Acetyl-CoA-binding residues include S354, S363, Y408, and K432.

It belongs to the MYST (SAS/MOZ) family. As to quaternary structure, component of a multisubunit histone acetyltransferase complex (MSL) at least composed of the MOF/KAT8, MSL1/hampin, MSL2L1 and MSL3L1. Component of the NSL complex at least composed of MOF/KAT8, KANSL1, KANSL2, KANSL3, MCRS1, PHF20, OGT1/OGT, WDR5 and HCFC1. Component of some MLL1/MLL complex, at least composed of the core components KMT2A/MLL1, ASH2L, HCFC1, WDR5 and RBBP5, as well as the facultative components BACC1, CHD8, E2F6, HSP70, INO80C, KANSL1, LAS1L, MAX, MCRS1, MGA, MOF/KAT8, PELP1, PHF20, PRP31, RING2, RUVB1/TIP49A, RUVB2/TIP49B, SENP3, TAF1, TAF4, TAF6, TAF7, TAF9 and TEX10. Interacts with the chromodomain of MORF4L1/MRG15. Interacts with ATM (via its Tudor-knot domain); possibly regulating the activity of ATM. Interacts with NELFD. In terms of processing, acetylation at Lys-274 facilitates cognate substrate Lys-binding and acetylation. Although considered as an autoacetylation event, acetylation at Lys-274 probably takes place via a non-enzymatic process following acetyl-CoA-binding, which primes KAT8 for cognate protein-lysine acetylation. Deacetylated by SIRT1.

The protein resides in the nucleus. It localises to the chromosome. It is found in the mitochondrion. The enzyme catalyses L-lysyl-[histone] + acetyl-CoA = N(6)-acetyl-L-lysyl-[histone] + CoA + H(+). It carries out the reaction L-lysyl-[protein] + acetyl-CoA = N(6)-acetyl-L-lysyl-[protein] + CoA + H(+). The catalysed reaction is propanoyl-CoA + L-lysyl-[protein] = N(6)-propanoyl-L-lysyl-[protein] + CoA + H(+). Its activity is regulated as follows. The acetyltransferase activity is inhibited by anacardic acid derivatives. Functionally, histone acetyltransferase that catalyzes histone H4 acetylation at 'Lys-5'- and 'Lys-8' (H4K5ac and H4K8ac) or 'Lys-16' (H4K16ac), depending on the context. Catalytic component of the MSL histone acetyltransferase complex, a multiprotein complex that mediates the majority of histone H4 acetylation at 'Lys-16' (H4K16ac), an epigenetic mark that prevents chromatin compaction. H4K16ac constitutes the only acetylation mark intergenerationally transmitted and regulates key biological processes, such as oogenesis, embryonic stem cell pluripotency, hematopoiesis or glucose metabolism. The MSL complex is required for chromosome stability and genome integrity by maintaining homeostatic levels of H4K16ac. The MSL complex is also involved in gene dosage by promoting up-regulation of genes expressed by the X chromosome. X up-regulation is required to compensate for autosomal biallelic expression. The MSL complex also participates in gene dosage compensation by promoting expression of Tsix non-coding RNA. As part of the NSL histone acetyltransferase complex, catalyzes histone H4 acetylation at 'Lys-5'- and 'Lys-8' (H4K5ac and H4K8ac) at transcription start sites and promotes transcription initiation. The NSL complex also acts as a regulator of gene expression in mitochondria: KAT8 associates with mitochondrial DNA and controls expression of respiratory genes in an acetyltransferase-dependent mechanism. Also functions as an acetyltransferase for non-histone targets, such as ALKBH5, COX17, IRF3, KDM1A/LSD1, LMNA, PAX7 or TP53/p53. Acts as an inhibitor of antiviral immunity by acetylating IRF3, preventing IRF3 recruitment to promoters. Acts as a regulator of asymmetric division in muscle stem cells by mediating acetylation of PAX7. As part of the NSL complex, acetylates TP53/p53 at 'Lys-120'. Acts as a regulator of epithelial-to-mesenchymal transition as part of the NSL complex by mediating acetylation of KDM1A/LSD1. The NSL complex is required for nuclear architecture maintenance by mediating acetylation of LMNA. Promotes mitochondrial integrity by catalyzing acetylation of COX17. In addition to protein acetyltransferase activity, able to mediate protein propionylation. This Rattus norvegicus (Rat) protein is Histone acetyltransferase KAT8 (Kat8).